The following is a 391-amino-acid chain: ATP-sensitive inward rectifier potassium channel 1 (391 aa).

Over 1 to 77 (MGASERSVFR…IWTTVLDLKW (77 aa)) the chain is Cytoplasmic. Residue serine 44 is modified to Phosphoserine; by SGK1. Residues 78 to 102 (RYKMTVFITAFLGSWFLFGLLWYVV) form a helical membrane-spanning segment. Residues 103 to 127 (AYVHKDLPEFYPPDNRTPCVENING) are Extracellular-facing. The N-linked (GlcNAc...) asparagine glycan is linked to asparagine 117. The helical; Pore-forming intramembrane region spans 128-139 (MTSAFLFSLETQ). Positions 140 to 146 (VTIGYGF) form an intramembrane region, pore-forming. Positions 141-146 (TIGYGF) match the Selectivity filter motif. Residues 147-155 (RFVTEQCAT) are Extracellular-facing. A helical membrane pass occupies residues 156-177 (AIFLLIFQSILGVIINSFMCGA). The Cytoplasmic segment spans residues 178–391 (ILAKISRPKK…EVDETDDTQM (214 aa)). Residues 180-207 (AKISRPKKRAKTITFSKNAVISKRGGKL) form a polyphosphoinositide (PIP2)-binding region. 223 to 230 (GSHIYGKL) contacts ATP.

Belongs to the inward rectifier-type potassium channel (TC 1.A.2.1) family. KCNJ1 subfamily. In terms of assembly, interacts with SGK1 and SLC9A3R2/NHERF2. In terms of processing, phosphorylation at Ser-44 by SGK1 is necessary for its expression at the cell membrane. Mainly in kidney (renal cortex, medulla and papilla). As to expression, kidney.

It is found in the cell membrane. It carries out the reaction K(+)(in) = K(+)(out). Its activity is regulated as follows. Inhibited by WNK3. Activated by phosphatidylinositol 4,5 biphosphate (PtdIns(4,5)P2). Inward rectifier potassium channels are characterized by a greater tendency to allow potassium to flow into the cell rather than out of it. Their voltage dependence is regulated by the concentration of extracellular potassium; as external potassium is raised, the voltage range of the channel opening shifts to more positive voltages. The inward rectification is mainly due to the blockage of outward current by internal magnesium. This channel is activated by internal ATP and can be blocked by external barium. In the kidney, probably plays a major role in potassium homeostasis. Functionally, inward rectifier potassium channels are characterized by a greater tendency to allow potassium to flow into the cell rather than out of it. Their voltage dependence is regulated by the concentration of extracellular potassium; as external potassium is raised, the voltage range of the channel opening shifts to more positive voltages. In Rattus norvegicus (Rat), this protein is ATP-sensitive inward rectifier potassium channel 1 (Kcnj1).